The chain runs to 127 residues: uncharacterized protein (127 aa).

This is an uncharacterized protein from Archaeoglobus fulgidus (strain ATCC 49558 / DSM 4304 / JCM 9628 / NBRC 100126 / VC-16).